Consider the following 224-residue polypeptide: Thiamine-phosphate synthase (224 aa).

Residues 41-45 (QFRDK) and Asp-77 each bind 4-amino-2-methyl-5-(diphosphooxymethyl)pyrimidine. Mg(2+) is bound by residues Asp-78 and Asp-97. Position 116 (Ser-116) interacts with 4-amino-2-methyl-5-(diphosphooxymethyl)pyrimidine. A 2-[(2R,5Z)-2-carboxy-4-methylthiazol-5(2H)-ylidene]ethyl phosphate-binding site is contributed by 143 to 145 (TNS). Position 146 (Lys-146) interacts with 4-amino-2-methyl-5-(diphosphooxymethyl)pyrimidine. 2-[(2R,5Z)-2-carboxy-4-methylthiazol-5(2H)-ylidene]ethyl phosphate contacts are provided by residues Gly-174 and 194-195 (IS).

The protein belongs to the thiamine-phosphate synthase family. The cofactor is Mg(2+).

It catalyses the reaction 2-[(2R,5Z)-2-carboxy-4-methylthiazol-5(2H)-ylidene]ethyl phosphate + 4-amino-2-methyl-5-(diphosphooxymethyl)pyrimidine + 2 H(+) = thiamine phosphate + CO2 + diphosphate. The catalysed reaction is 2-(2-carboxy-4-methylthiazol-5-yl)ethyl phosphate + 4-amino-2-methyl-5-(diphosphooxymethyl)pyrimidine + 2 H(+) = thiamine phosphate + CO2 + diphosphate. The enzyme catalyses 4-methyl-5-(2-phosphooxyethyl)-thiazole + 4-amino-2-methyl-5-(diphosphooxymethyl)pyrimidine + H(+) = thiamine phosphate + diphosphate. The protein operates within cofactor biosynthesis; thiamine diphosphate biosynthesis; thiamine phosphate from 4-amino-2-methyl-5-diphosphomethylpyrimidine and 4-methyl-5-(2-phosphoethyl)-thiazole: step 1/1. Functionally, condenses 4-methyl-5-(beta-hydroxyethyl)thiazole monophosphate (THZ-P) and 2-methyl-4-amino-5-hydroxymethyl pyrimidine pyrophosphate (HMP-PP) to form thiamine monophosphate (TMP). This Latilactobacillus sakei subsp. sakei (strain 23K) (Lactobacillus sakei subsp. sakei) protein is Thiamine-phosphate synthase.